Consider the following 395-residue polypeptide: Flap endonuclease 1 (395 aa).

Residues 1–108 (MGILGLSKLL…DELEMRRQKA (108 aa)) form an N-domain region. Asp-34 is a binding site for Mg(2+). Arg-74 contacts DNA. Asp-90 contacts Mg(2+). Positions 116 to 136 (EKAKDAGDDEMMEKMSKRTVR) are disordered. The interval 126–257 (MMEKMSKRTV…QKAWEGIQRY (132 aa)) is I-domain. Glu-162, Glu-164, Asp-183, and Asp-185 together coordinate Mg(2+). A DNA-binding site is contributed by Glu-162. Positions 235 and 237 each coordinate DNA. A Mg(2+)-binding site is contributed by Asp-237. An interaction with PCNA region spans residues 340-348 (TQGRLDSFF).

Belongs to the XPG/RAD2 endonuclease family. FEN1 subfamily. Interacts with PCNA. Three molecules of FEN1 bind to one PCNA trimer with each molecule binding to one PCNA monomer. PCNA stimulates the nuclease activity without altering cleavage specificity. Mg(2+) is required as a cofactor. Post-translationally, phosphorylated. Phosphorylation upon DNA damage induces relocalization to the nuclear plasma.

The protein resides in the nucleus. The protein localises to the nucleolus. It localises to the nucleoplasm. Its subcellular location is the mitochondrion. In terms of biological role, structure-specific nuclease with 5'-flap endonuclease and 5'-3' exonuclease activities involved in DNA replication and repair. During DNA replication, cleaves the 5'-overhanging flap structure that is generated by displacement synthesis when DNA polymerase encounters the 5'-end of a downstream Okazaki fragment. It enters the flap from the 5'-end and then tracks to cleave the flap base, leaving a nick for ligation. Also involved in the long patch base excision repair (LP-BER) pathway, by cleaving within the apurinic/apyrimidinic (AP) site-terminated flap. Acts as a genome stabilization factor that prevents flaps from equilibrating into structures that lead to duplications and deletions. Also possesses 5'-3' exonuclease activity on nicked or gapped double-stranded DNA, and exhibits RNase H activity. Also involved in replication and repair of rDNA and in repairing mitochondrial DNA. This chain is Flap endonuclease 1, found in Leishmania major.